Consider the following 400-residue polypeptide: Beta-ketoadipyl-CoA thiolase (400 aa).

Catalysis depends on cysteine 90, which acts as the Acyl-thioester intermediate. Active-site proton acceptor residues include histidine 356 and cysteine 386.

Belongs to the thiolase-like superfamily. Thiolase family.

It carries out the reaction succinyl-CoA + acetyl-CoA = 3-oxoadipyl-CoA + CoA. It functions in the pathway aromatic compound metabolism; beta-ketoadipate pathway; acetyl-CoA and succinyl-CoA from 3-oxoadipate: step 2/2. Catalyzes thiolytic cleavage of beta-ketoadipyl-CoA to succinyl-CoA and acetyl-CoA. The sequence is that of Beta-ketoadipyl-CoA thiolase (pcaF) from Pseudomonas putida (Arthrobacter siderocapsulatus).